The primary structure comprises 276 residues: Octanoyltransferase LipM (276 aa).

The BPL/LPL catalytic domain occupies 32 to 247; it reads GALPPVIRFY…GFEKGLDIKL (216 aa). Residue C149 is the Acyl-thioester intermediate of the active site.

The protein belongs to the octanoyltransferase LipM family. In terms of assembly, monomer.

The catalysed reaction is octanoyl-[ACP] + L-lysyl-[protein] = N(6)-octanoyl-L-lysyl-[protein] + holo-[ACP] + H(+). Its pathway is protein modification; protein lipoylation via endogenous pathway; protein N(6)-(lipoyl)lysine from octanoyl-[acyl-carrier-protein]. Functionally, catalyzes the transfer of endogenously produced octanoic acid from octanoyl-acyl-carrier-protein onto the lipoyl domain of GcvH, an intermediate carrier during protein lipoylation. This is Octanoyltransferase LipM from Macrococcus caseolyticus (strain JCSC5402) (Macrococcoides caseolyticum).